The primary structure comprises 271 residues: Urease accessory protein UreD (271 aa).

The protein belongs to the UreD family. UreD, UreF and UreG form a complex that acts as a GTP-hydrolysis-dependent molecular chaperone, activating the urease apoprotein by helping to assemble the nickel containing metallocenter of UreC. The UreE protein probably delivers the nickel.

The protein localises to the cytoplasm. Functionally, required for maturation of urease via the functional incorporation of the urease nickel metallocenter. The protein is Urease accessory protein UreD of Mycolicibacterium smegmatis (strain ATCC 700084 / mc(2)155) (Mycobacterium smegmatis).